We begin with the raw amino-acid sequence, 324 residues long: Heparan sulfate 2-O-sulfotransferase hst-2 (324 aa).

Over 1–6 the chain is Cytoplasmic; it reads MLWKKR. The helical; Signal-anchor for type II membrane protein transmembrane segment at 7–24 threads the bilayer; the sequence is KVLYFAGISVFILILLLL. Topologically, residues 25–324 are lumenal; it reads KLNSKPKANV…QYHFEKIKPS (300 aa). N75 and N94 each carry an N-linked (GlcNAc...) asparagine glycan. Catalysis depends on residues H107 and H109. The N-linked (GlcNAc...) asparagine glycan is linked to N161. 2 disulfide bridges follow: C167–C175 and C188–C194.

Belongs to the sulfotransferase 3 family. Homotrimer. As to expression, present in the hypodermis, muscle, distal tip cells (DTCs) and in neurons (at protein level).

It is found in the golgi apparatus membrane. Functionally, catalyzes the transfer of sulfate to the C2-position of selected hexuronic acid residues within the maturing heparan sulfate (HS). Involved in cell adhesion and guidance by specifically modifying proteoglycans in the extracellular matrix and on the cell surface that are essential for axon migrations. This is Heparan sulfate 2-O-sulfotransferase hst-2 from Caenorhabditis elegans.